The primary structure comprises 297 residues: Cytidine deaminase (297 aa).

CMP/dCMP-type deaminase domains follow at residues 50–170 (SDKE…FGPK) and 189–297 (ETES…YASL). 91–93 (NME) provides a ligand contact to substrate. His104 lines the Zn(2+) pocket. The Proton donor role is filled by Glu106. Zn(2+)-binding residues include Cys131 and Cys134.

It belongs to the cytidine and deoxycytidylate deaminase family. In terms of assembly, homodimer. Zn(2+) is required as a cofactor.

The catalysed reaction is cytidine + H2O + H(+) = uridine + NH4(+). It carries out the reaction 2'-deoxycytidine + H2O + H(+) = 2'-deoxyuridine + NH4(+). Functionally, this enzyme scavenges exogenous and endogenous cytidine and 2'-deoxycytidine for UMP synthesis. The sequence is that of Cytidine deaminase from Aliivibrio fischeri (strain ATCC 700601 / ES114) (Vibrio fischeri).